Reading from the N-terminus, the 529-residue chain is uncharacterized protein (529 aa).

ABC transporter domains follow at residues 6 to 257 (LAIE…QKLL) and 287 to 526 (IRKG…RQLL). Residues 42 to 49 (GESGSGKS) and 319 to 326 (GESGSGKS) each bind ATP.

This sequence belongs to the ABC transporter superfamily.

This is an uncharacterized protein from Escherichia coli (strain K12).